The sequence spans 238 residues: Endonuclease III homolog (238 aa).

The HhH domain maps to 129-155; the sequence is REKGLPREMKDLISLPGIGNKMALLYM. The active-site Nucleophile; for N-glycosylase activity is Lys149. Residues Cys217, Cys224, Cys227, and Cys233 each coordinate [4Fe-4S] cluster.

It belongs to the Nth/MutY family. Requires [4Fe-4S] cluster as cofactor.

It is found in the nucleus. The protein localises to the mitochondrion. The catalysed reaction is 2'-deoxyribonucleotide-(2'-deoxyribose 5'-phosphate)-2'-deoxyribonucleotide-DNA = a 3'-end 2'-deoxyribonucleotide-(2,3-dehydro-2,3-deoxyribose 5'-phosphate)-DNA + a 5'-end 5'-phospho-2'-deoxyribonucleoside-DNA + H(+). Functionally, bifunctional DNA N-glycosylase with associated apurinic/apyrimidinic (AP) lyase function that catalyzes the first step in base excision repair (BER), the primary repair pathway for the repair of oxidative DNA damage. The DNA N-glycosylase activity releases the damaged DNA base from DNA by cleaving the N-glycosidic bond, leaving an AP site. The AP lyase activity cleaves the phosphodiester bond 3' to the AP site by a beta-elimination. Primarily recognizes and repairs oxidative base damage of pyrimidines. The protein is Endonuclease III homolog of Encephalitozoon cuniculi (strain GB-M1) (Microsporidian parasite).